Here is a 470-residue protein sequence, read N- to C-terminus: FAD-dependent monooxygenase dpchE (470 aa).

An N-terminal signal peptide occupies residues 1 to 24 (MSEPHFKVIIVGGSITGLTLAHSL). The FAD site is built by Glu-35, Gly-49, and Arg-108. Asn-128 carries an N-linked (GlcNAc...) asparagine glycan. Arg-193 is a catalytic residue. Positions 312 and 325 each coordinate FAD. Residues 447 to 463 (WAVVSRSVLLLVGLAIL) form a helical membrane-spanning segment.

It belongs to the paxM FAD-dependent monooxygenase family. FAD serves as cofactor.

Its subcellular location is the membrane. The protein operates within secondary metabolite biosynthesis; terpenoid biosynthesis. Functionally, FAD-dependent monooxygenase; part of the gene cluster that mediates the biosynthesis of the diterpenoid pyrones higginsianins A and B. The first step of the pathway is the synthesis of the alpha-pyrone moiety by the polyketide synthase dpchA via condensation of one acetyl-CoA starter unit with 3 malonyl-CoA units and 2 methylations. The alpha-pyrone is then combined with geranylgeranyl pyrophosphate (GGPP) formed by the GGPP synthase dpchD through the action of the prenyltransferase dpchC to yield a linear alpha-pyrone diterpenoid. Subsequent steps in the diterpenoid pyrone biosynthetic pathway involve the decalin core formation, which is initiated by the epoxidation of the C10-C11 olefin by the FAD-dependent oxidoreductase dpchE, and is followed by a cyclization cascade catalyzed by the terpene cyclase dpchB. The short chain dehydrogenase/reductase dpchG then oxidizes the 8S hydroxy group to a ketone and the short chain dehydrogenase/reductase dpchH reduces the ketone to the 8R hydroxy group to yield higginsianin B. Finally, the FAD-dependent oxidoreductase dpchF converts higginsianin B into higginsianin A. This chain is FAD-dependent monooxygenase dpchE, found in Colletotrichum higginsianum (strain IMI 349063) (Crucifer anthracnose fungus).